A 262-amino-acid polypeptide reads, in one-letter code: MRTELLSKLYDDFGIDQLPHTQHGVTSDRLGKLYEKYILDIFKDIESLKKYNTNAFPQEKDISSKLLKALNLDLDNIIDVSSSDTDLGRTIAGGSPKTDATIRFTFHNQSSRLVPLNIKHSSKKKVSIAEYDVETICTGVGISDGELKELIRKHQNDQSAKLFTPVQKQRLTELLEPYRERFIRWCVTLRAEKSEGNILHPDLLIRFQVIDREYVDVTIKNIDDYVSDRIAEGSKARKPGFGTGLNWTYASGSKAKKMQFKG.

The enzyme catalyses Endonucleolytic cleavage of DNA to give specific double-stranded fragments with terminal 5'-phosphates.. A P subtype restriction enzyme that recognizes the double-stranded sequence 5'-CCGG-3' and cleaves after C-1. The polypeptide is Type II restriction enzyme MspI (mspIR) (Moraxella sp).